The chain runs to 229 residues: Potassium/proton antiporter CemA (229 aa).

4 helical membrane passes run 7-27, 114-134, 154-174, and 189-209; these read FTPL…SLSL, IICF…LLIL, ILLL…ELMI, and IISG…KYWI.

The protein belongs to the CemA family.

It localises to the plastid. The protein resides in the chloroplast inner membrane. It carries out the reaction K(+)(in) + H(+)(out) = K(+)(out) + H(+)(in). Contributes to K(+)/H(+) antiport activity by supporting proton efflux to control proton extrusion and homeostasis in chloroplasts in a light-dependent manner to modulate photosynthesis. Prevents excessive induction of non-photochemical quenching (NPQ) under continuous-light conditions. Indirectly promotes efficient inorganic carbon uptake into chloroplasts. This is Potassium/proton antiporter CemA from Vitis vinifera (Grape).